Reading from the N-terminus, the 171-residue chain is NADH-quinone oxidoreductase subunit I (171 aa).

2 4Fe-4S ferredoxin-type domains span residues L41–T71 and E81–D110. [4Fe-4S] cluster contacts are provided by C51, C54, C57, C61, C90, C93, C96, and C100.

It belongs to the complex I 23 kDa subunit family. NDH-1 is composed of 13 different subunits. Subunits NuoA, H, J, K, L, M, N constitute the membrane sector of the complex. Requires [4Fe-4S] cluster as cofactor.

Its subcellular location is the cell inner membrane. It catalyses the reaction a quinone + NADH + 5 H(+)(in) = a quinol + NAD(+) + 4 H(+)(out). Its function is as follows. NDH-1 shuttles electrons from NADH, via FMN and iron-sulfur (Fe-S) centers, to quinones in the respiratory chain. The immediate electron acceptor for the enzyme in this species is believed to be ubiquinone. Couples the redox reaction to proton translocation (for every two electrons transferred, four hydrogen ions are translocated across the cytoplasmic membrane), and thus conserves the redox energy in a proton gradient. The chain is NADH-quinone oxidoreductase subunit I from Shewanella woodyi (strain ATCC 51908 / MS32).